The primary structure comprises 637 residues: Interleukin-17 receptor E (637 aa).

Positions 1–23 (MGSPRLAALLLSLPLLLIGLAVS) are cleaved as a signal peptide. The Extracellular segment spans residues 24–414 (ARVACPCLRS…VLCPDVSHRH (391 aa)). A disordered region spans residues 87–134 (GSPSLSEESHRISIPSSAISHRGQRTKRAQPSAAEGREHLPEAGSQKC). 2 N-linked (GlcNAc...) asparagine glycosylation sites follow: N278 and N307. Residues 415-435 (LGLLILALLALTALVGVVLVL) form a helical membrane-spanning segment. Residues 436–637 (LGRRLLPGSG…TNSPCGFSCL (202 aa)) lie on the Cytoplasmic side of the membrane. In terms of domain architecture, SEFIR spans 447-583 (TRPVLLLHAA…LLRDLPRLLR (137 aa)).

As to quaternary structure, forms heterodimers with IL17RA; the heterodimer binds IL17C. Predominantly expressed in mucosal tissues, including trachea, lung, kidney and stomach. Highly expressed in colon epithelial cells. Also expressed in testis. Low expression, if any, in heart, liver, spleen, or brain. Among CD4 T-helper cells, expressed at high levels in Th17 cells.

Its subcellular location is the cell membrane. It is found in the secreted. It localises to the cytoplasm. Specific functional receptor for IL17C, signaling through the NF-kappa-B and MAPK pathways. Requires TRAF3IP2 /ACT1 for signaling. Crucial regulator in innate immunity to bacterial pathogens, such as Citrobacter rodentium. Isoform 4 and isoform 5 may be either cytoplasmic inactive or dominant active forms. Isoform 2 and isoform 3 may act as soluble decoy receptors. In Mus musculus (Mouse), this protein is Interleukin-17 receptor E (Il17re).